The chain runs to 649 residues: Transcription factor E2-alpha (649 aa).

Disordered stretches follow at residues 34–107 (GKGR…SERS), 127–206 (LPGE…SAKT), 222–267 (LHPS…GLQQ), 291–325 (SAAP…SSSG), and 339–382 (DHSS…DGGL). 2 stretches are compositionally biased toward polar residues: residues 56–76 (SSGS…SRTY) and 85–94 (SHNSLPSSTF). Residues 127-143 (LPGELGLSSPGPLSPSG) are compositionally biased toward low complexity. 2 positions are modified to phosphoserine: Ser135 and Ser140. The span at 145–156 (KSGSQYYPSYPS) shows a compositional bias: polar residues. The short motif at 171-177 (SKKVRKV) is the Nuclear localization signal element. Composition is skewed to low complexity over residues 182–193 (PSSVYPSSSGDS) and 242–259 (GDGS…SVGS). The segment covering 339–352 (DHSSNNFSPSPSTP) has biased composition (low complexity). Thr351 carries the post-translational modification Phosphothreonine. Position 355 is a phosphoserine (Ser355). Arg367 carries the post-translational modification Omega-N-methylarginine. Phosphoserine is present on Ser375. Residues 385-420 (LSKMEDRLDEAIHVLRSHAVGTASDLHGLLPGHGAL) form a leucine-zipper region. The segment at 431-547 (GGRHAGLVGG…KAEREKERRV (117 aa)) is disordered. Over residues 448–469 (TSGTSLLHTHASLPSQASSLPD) the composition is skewed to polar residues. A Glycyl lysine isopeptide (Lys-Gly) (interchain with G-Cter in SUMO2) cross-link involves residue Lys494. Ser524 carries the phosphoserine modification. Glu529 bears the Phosphothreonine mark. A compositionally biased stretch (basic and acidic residues) spans 537–547 (QKAEREKERRV). The 54-residue stretch at 544 to 597 (ERRVANNARERLRVRDINEAFKELGRMCQLHLSSEKPQTKLLILHQAVAVILSL) folds into the bHLH domain. A Glycyl lysine isopeptide (Lys-Gly) (interchain with G-Cter in SUMO2) cross-link involves residue Lys620.

Homodimer. Heterodimer; efficient DNA binding requires dimerization with another bHLH protein. Forms a heterodimer with TWIST1 and TWIST2. Forms a heterodimer with NEUROD1; the heterodimer is inhibited in presence of ID2, but not NR0B2, to E-box element. Forms a heterodimer with TCF15; the heterodimer binds E-box element. Forms a heterodimer with MYOG; heterodimerization enhances MYOG DNA-binding and transcriptional activities. Forms a heterodimer with ATOH8; repress transcription of TCF3 and TCF3-NEUROG3 dimer-induced transactivation of E box-dependent promoters. Component of a nuclear TAL-1 complex composed at least of CBFA2T3, LDB1, TAL1 and TCF3. Interacts with NEUROD2. Interacts with EP300. Interacts with PTF1A, TGFB1I1 and UBE2I. Interacts with BHLHA9. Interacts with ASB2; the interaction is mediated by SKP2 and targets TCF3 for Notch-induced proteasomal degradation. Interacts with transcription factor ASCL5/AmeloD. In terms of assembly, interacts with RALGAPA1. Interacts with FIGLA. As to quaternary structure, forms a heterodimer with ATOH7; required for ATOH7 DNA-binding. In terms of processing, phosphorylated following NGF stimulation. Undergoes Notch-induced ubiquitination and subsequent proteasomal degradation which is mediated by ASB1 or ASB2, the substrate-recognition components of probable ECS E3 ubiquitin-protein ligase complexes.

The protein resides in the nucleus. In terms of biological role, transcriptional regulator. Involved in the initiation of neuronal differentiation and mesenchymal to epithelial transition. Heterodimers between TCF3 and tissue-specific basic helix-loop-helix (bHLH) proteins play major roles in determining tissue-specific cell fate during embryogenesis, like muscle or early B-cell differentiation. Together with TCF15, required for the mesenchymal to epithelial transition. Dimers bind DNA on E-box motifs: 5'-CANNTG-3'. Binds to the kappa-E2 site in the kappa immunoglobulin gene enhancer. Binds to IEB1 and IEB2, which are short DNA sequences in the insulin gene transcription control region. Its function is as follows. Facilitates ATOH7 binding to DNA at the consensus sequence 5'-CAGGTG-3', and positively regulates transcriptional activity. This Mesocricetus auratus (Golden hamster) protein is Transcription factor E2-alpha (TCF3).